Consider the following 117-residue polypeptide: MSIIIDRINQEQMRQDHPDFRPGDTVAVHIRIIEGSKERVQLFQGVVIKRQKGTMDASYTVRKISHGVGVEKTFALHNPRIEKIEVITRGRVRRSRLYYLRDLRGKAARIRERSLRR.

This sequence belongs to the bacterial ribosomal protein bL19 family.

In terms of biological role, this protein is located at the 30S-50S ribosomal subunit interface and may play a role in the structure and function of the aminoacyl-tRNA binding site. In Desulfotalea psychrophila (strain LSv54 / DSM 12343), this protein is Large ribosomal subunit protein bL19.